The primary structure comprises 109 residues: Small ribosomal subunit protein bS6 (109 aa).

The protein belongs to the bacterial ribosomal protein bS6 family.

Functionally, binds together with bS18 to 16S ribosomal RNA. The chain is Small ribosomal subunit protein bS6 from Ehrlichia chaffeensis (strain ATCC CRL-10679 / Arkansas).